A 368-amino-acid polypeptide reads, in one-letter code: Biotin synthase (368 aa).

Positions 74–309 (CCGNVVDLCS…QQILRYAGGR (236 aa)) constitute a Radical SAM core domain. Residues C92, C96, and C99 each coordinate [4Fe-4S] cluster. Positions 137, 174, 234, and 304 each coordinate [2Fe-2S] cluster.

It belongs to the radical SAM superfamily. Biotin synthase family. Homodimer. [4Fe-4S] cluster is required as a cofactor. [2Fe-2S] cluster serves as cofactor.

The catalysed reaction is (4R,5S)-dethiobiotin + (sulfur carrier)-SH + 2 reduced [2Fe-2S]-[ferredoxin] + 2 S-adenosyl-L-methionine = (sulfur carrier)-H + biotin + 2 5'-deoxyadenosine + 2 L-methionine + 2 oxidized [2Fe-2S]-[ferredoxin]. Its pathway is cofactor biosynthesis; biotin biosynthesis; biotin from 7,8-diaminononanoate: step 2/2. Its function is as follows. Catalyzes the conversion of dethiobiotin (DTB) to biotin by the insertion of a sulfur atom into dethiobiotin via a radical-based mechanism. This chain is Biotin synthase, found in Rippkaea orientalis (strain PCC 8801 / RF-1) (Cyanothece sp. (strain PCC 8801)).